A 21-amino-acid polypeptide reads, in one-letter code: Brevinin-1OKb (21 aa).

Lysine 21 carries the lysine amide modification.

As to expression, expressed by the skin glands.

The protein resides in the secreted. Functionally, antimicrobial peptide. The polypeptide is Brevinin-1OKb (Nidirana okinavana (Kampira Falls frog)).